The chain runs to 361 residues: 3-dehydroquinate synthase (361 aa).

NAD(+) contacts are provided by residues 106–110, 130–131, Lys143, and Lys152; these read GVVGD and TT. Zn(2+) is bound by residues Glu185, His247, and His264.

Belongs to the sugar phosphate cyclases superfamily. Dehydroquinate synthase family. NAD(+) serves as cofactor. It depends on Co(2+) as a cofactor. The cofactor is Zn(2+).

It localises to the cytoplasm. It carries out the reaction 7-phospho-2-dehydro-3-deoxy-D-arabino-heptonate = 3-dehydroquinate + phosphate. It functions in the pathway metabolic intermediate biosynthesis; chorismate biosynthesis; chorismate from D-erythrose 4-phosphate and phosphoenolpyruvate: step 2/7. Functionally, catalyzes the conversion of 3-deoxy-D-arabino-heptulosonate 7-phosphate (DAHP) to dehydroquinate (DHQ). In Gloeobacter violaceus (strain ATCC 29082 / PCC 7421), this protein is 3-dehydroquinate synthase.